Here is a 443-residue protein sequence, read N- to C-terminus: MSKLNMTPREIVAYLDEYIIGQKEAKKSIAIAFRNRYRRLQLEKSLQEEITPKNILMIGSTGVGKTEIARRIAKIMELPFVKVEASKYTEVGFVGRDVESMVRDLVNNSVLLVENEHKEKLKDKIEEAVIEKIAKKLLPPLPSGVSEEKKQEYANSLLKMQQRIAQGELDSREIEIEVRKKSIEIDSNVPPEILRVQENLIKVFHKEQDKVKKTLSVKEAKEALKAEISDTLLDSEAIKMEGLKRAESSGVIFIDEIDKIAVSSKEGSRQDPSKEGVQRDLLPIVEGSVVNTKYGSIKTEHILFIAAGAFHLSKPSDLIPELQGRFPLRVELENLTEEIMYMILTQTKTSIIKQYQALLKVEGVGIAFEDDAIKELAKLSYNANQKSEDIGARRLHTTIEKVLEDISFEAEDYSGQKVTITKELVQSKLEDLVADENLVKYIL.

ATP contacts are provided by residues I20, 62–67 (GVGKTE), D255, E321, and R393.

Belongs to the ClpX chaperone family. HslU subfamily. As to quaternary structure, a double ring-shaped homohexamer of HslV is capped on each side by a ring-shaped HslU homohexamer. The assembly of the HslU/HslV complex is dependent on binding of ATP.

The protein localises to the cytoplasm. Its function is as follows. ATPase subunit of a proteasome-like degradation complex; this subunit has chaperone activity. The binding of ATP and its subsequent hydrolysis by HslU are essential for unfolding of protein substrates subsequently hydrolyzed by HslV. HslU recognizes the N-terminal part of its protein substrates and unfolds these before they are guided to HslV for hydrolysis. This Helicobacter pylori (strain P12) protein is ATP-dependent protease ATPase subunit HslU.